A 335-amino-acid polypeptide reads, in one-letter code: 3-isopropylmalate dehydrogenase (335 aa).

Substrate-binding residues include R87, R97, R121, and D211. Residues D211, D235, and D239 each contribute to the Mg(2+) site. An NAD(+)-binding site is contributed by 271 to 283 (GSAPDIAGQSKAD).

It belongs to the isocitrate and isopropylmalate dehydrogenases family. LeuB type 2 subfamily. As to quaternary structure, homodimer. Mg(2+) serves as cofactor. It depends on Mn(2+) as a cofactor.

The protein resides in the cytoplasm. It carries out the reaction (2R,3S)-3-isopropylmalate + NAD(+) = 4-methyl-2-oxopentanoate + CO2 + NADH. It participates in amino-acid biosynthesis; L-leucine biosynthesis; L-leucine from 3-methyl-2-oxobutanoate: step 3/4. Functionally, catalyzes the oxidation of 3-carboxy-2-hydroxy-4-methylpentanoate (3-isopropylmalate) to 3-carboxy-4-methyl-2-oxopentanoate. The product decarboxylates to 4-methyl-2 oxopentanoate. The polypeptide is 3-isopropylmalate dehydrogenase (Nocardia farcinica (strain IFM 10152)).